The following is a 144-amino-acid chain: Large ribosomal subunit protein uL15 (144 aa).

The segment at Met-1–Gly-49 is disordered. Residues Arg-21–Ala-31 show a composition bias toward gly residues.

It belongs to the universal ribosomal protein uL15 family. Part of the 50S ribosomal subunit.

Binds to the 23S rRNA. The protein is Large ribosomal subunit protein uL15 of Shewanella frigidimarina (strain NCIMB 400).